The primary structure comprises 291 residues: NAD kinase (291 aa).

Asp73 (proton acceptor) is an active-site residue. Residues 73-74 (DG), 147-148 (ND), Arg175, Asp177, and Gln246 contribute to the NAD(+) site.

Belongs to the NAD kinase family. A divalent metal cation serves as cofactor.

The protein resides in the cytoplasm. It carries out the reaction NAD(+) + ATP = ADP + NADP(+) + H(+). In terms of biological role, involved in the regulation of the intracellular balance of NAD and NADP, and is a key enzyme in the biosynthesis of NADP. Catalyzes specifically the phosphorylation on 2'-hydroxyl of the adenosine moiety of NAD to yield NADP. The protein is NAD kinase of Chromobacterium violaceum (strain ATCC 12472 / DSM 30191 / JCM 1249 / CCUG 213 / NBRC 12614 / NCIMB 9131 / NCTC 9757 / MK).